The sequence spans 147 residues: Ribonuclease H (147 aa).

An RNase H type-1 domain is found at 5-141 (ARKQITLYSD…CDELARNEAE (137 aa)). Mg(2+) contacts are provided by D14, E52, D74, and D133.

Belongs to the RNase H family. Monomer. It depends on Mg(2+) as a cofactor.

The protein localises to the cytoplasm. The catalysed reaction is Endonucleolytic cleavage to 5'-phosphomonoester.. Functionally, endonuclease that specifically degrades the RNA of RNA-DNA hybrids. This is Ribonuclease H from Sulfurovum sp. (strain NBC37-1).